The following is an 89-amino-acid chain: Small ribosomal subunit protein uS14 (89 aa).

The protein belongs to the universal ribosomal protein uS14 family. In terms of assembly, part of the 30S ribosomal subunit. Contacts proteins S3 and S10.

Functionally, binds 16S rRNA, required for the assembly of 30S particles and may also be responsible for determining the conformation of the 16S rRNA at the A site. The protein is Small ribosomal subunit protein uS14 of Chlorobium phaeovibrioides (strain DSM 265 / 1930) (Prosthecochloris vibrioformis (strain DSM 265)).